We begin with the raw amino-acid sequence, 103 residues long: Small ribosomal subunit protein uS14c (103 aa).

The tract at residues 34 to 56 (KVSPLSLSEKTKMREKLQSLPRN) is disordered.

It belongs to the universal ribosomal protein uS14 family. In terms of assembly, part of the 30S ribosomal subunit.

The protein resides in the plastid. Its subcellular location is the chloroplast. In terms of biological role, binds 16S rRNA, required for the assembly of 30S particles. This Brachypodium distachyon (Purple false brome) protein is Small ribosomal subunit protein uS14c.